The sequence spans 641 residues: WW domain-binding protein 11 (641 aa).

A compositionally biased stretch (polar residues) spans 1–11 (MGRRSTSSTKS). The disordered stretch occupies residues 1–37 (MGRRSTSSTKSGKFMNPTDQARKEARKRELKKNKKQR). The required for nuclear import stretch occupies residues 1–45 (MGRRSTSSTKSGKFMNPTDQARKEARKRELKKNKKQRMMVRAAVL). Lys-13 bears the N6-acetyllysine mark. Positions 28 to 37 (RELKKNKKQR) are enriched in basic residues. Residues 75-133 (EKVLKDKRKKLRETFERILRLYEKENPDIYKELRKLEVEYEQKRAQLSQYFDAVKNAQH) adopt a coiled-coil conformation. At Ser-181 the chain carries Phosphoserine. The segment at 186–213 (LGHGVPRLPPGRKPPGPPPGPPPPQVLQ) is disordered. The residue at position 192 (Arg-192) is an Omega-N-methylarginine. Residues 192-210 (RLPPGRKPPGPPPGPPPPQ) are compositionally biased toward pro residues. The interval 217 to 221 (RKVGF) is interaction with PP1. Tyr-236 carries the post-translational modification Phosphotyrosine. The segment at 236-549 (YSPELAQRGH…LIQRPKADDA (314 aa)) is disordered. Ser-237 is subject to Phosphoserine. Positions 253 to 263 (SEDDGYPEDMD) are enriched in acidic residues. Residues 276 to 304 (TDRSDAESDGDEFGHRDDSERDNTEEKKS) are compositionally biased toward basic and acidic residues. Phosphoserine occurs at positions 279 and 283. The tract at residues 306 to 310 (LSVRF) is interaction with PP1. Residues 351-365 (EFSEEEDDDDSEDSE) are compositionally biased toward acidic residues. A phosphoserine mark is found at Ser-353, Ser-361, and Ser-364. Basic and acidic residues predominate over residues 366 to 380 (AEKPSQKQHKEDSHA). The segment covering 381–404 (DGSSAASSQQQAPPQAVPPSQIQA) has biased composition (low complexity). 3 stretches are compositionally biased toward pro residues: residues 405–447 (PPMP…PPGM), 456–504 (RLLP…PPRP), and 510–530 (PLVP…PLPN). A PGR motif is present at residues 455–466 (PRLLPPGPPPGR). Lys-557 participates in a covalent cross-link: Glycyl lysine isopeptide (Lys-Gly) (interchain with G-Cter in SUMO2). The residue at position 565 (Lys-565) is an N6-acetyllysine. Residue Lys-572 forms a Glycyl lysine isopeptide (Lys-Gly) (interchain with G-Cter in SUMO2) linkage. A disordered region spans residues 588 to 623 (ENKGATAVPQRRSEEDSAVPVAKAAPRSGPSVPVSV). Ser-600 is subject to Phosphoserine.

Interacts with PPP1CA, PPP1CB and PPP1CC. Interacts via the PGR motif with PQBP1 in the nucleus. Interacts with the WW domains of WBP4.

It is found in the nucleus. The protein localises to the cytoplasm. Its function is as follows. Activates pre-mRNA splicing. May inhibit PP1 phosphatase activity. The chain is WW domain-binding protein 11 (Wbp11) from Rattus norvegicus (Rat).